The following is a 259-amino-acid chain: Ubiquinone/menaquinone biosynthesis C-methyltransferase UbiE (259 aa).

S-adenosyl-L-methionine is bound by residues T82, D103, and 131–132 (NA).

Belongs to the class I-like SAM-binding methyltransferase superfamily. MenG/UbiE family.

It catalyses the reaction a 2-demethylmenaquinol + S-adenosyl-L-methionine = a menaquinol + S-adenosyl-L-homocysteine + H(+). The catalysed reaction is a 2-methoxy-6-(all-trans-polyprenyl)benzene-1,4-diol + S-adenosyl-L-methionine = a 5-methoxy-2-methyl-3-(all-trans-polyprenyl)benzene-1,4-diol + S-adenosyl-L-homocysteine + H(+). It functions in the pathway quinol/quinone metabolism; menaquinone biosynthesis; menaquinol from 1,4-dihydroxy-2-naphthoate: step 2/2. Its pathway is cofactor biosynthesis; ubiquinone biosynthesis. Functionally, methyltransferase required for the conversion of demethylmenaquinol (DMKH2) to menaquinol (MKH2) and the conversion of 2-polyprenyl-6-methoxy-1,4-benzoquinol (DDMQH2) to 2-polyprenyl-3-methyl-6-methoxy-1,4-benzoquinol (DMQH2). The sequence is that of Ubiquinone/menaquinone biosynthesis C-methyltransferase UbiE from Agrobacterium fabrum (strain C58 / ATCC 33970) (Agrobacterium tumefaciens (strain C58)).